Reading from the N-terminus, the 462-residue chain is Putative endoglucanase type B (462 aa).

A signal peptide spans 1 to 16 (MAYKLILAAFAATALA). The region spanning 25–61 (CSNGVWAQCGGQNWSGTPCCTSGNKCVKLNDFYSQCQ) is the CBM1 domain. 2 disulfides stabilise this stretch: Cys-33/Cys-50 and Cys-44/Cys-60. The N-linked (GlcNAc...) asparagine glycan is linked to Asn-37. Residues 64-100 (SAEPSSTAAGPSSTTATKTTATGGSSTTAGGSVTSAP) are compositionally biased toward low complexity. The disordered stretch occupies residues 64-102 (SAEPSSTAAGPSSTTATKTTATGGSSTTAGGSVTSAPPA). Residues 66–99 (EPSSTAAGPSSTTATKTTATGGSSTTAGGSVTSA) are linker. Positions 100–462 (PPAASDNPYA…LLDNANPSFL (363 aa)) are catalytic. Asp-190 is an active-site residue. A disulfide bond links Cys-191 and Cys-250. Residue Asn-223 is glycosylated (N-linked (GlcNAc...) asparagine). The active-site Proton donor is the Asp-236. 2 N-linked (GlcNAc...) asparagine glycosylation sites follow: Asn-272 and Asn-317. An intrachain disulfide couples Cys-383 to Cys-430. Asp-416 serves as the catalytic Nucleophile.

This sequence belongs to the glycosyl hydrolase 6 (cellulase B) family.

The enzyme catalyses Endohydrolysis of (1-&gt;4)-beta-D-glucosidic linkages in cellulose, lichenin and cereal beta-D-glucans.. This is Putative endoglucanase type B from Fusarium oxysporum (Fusarium vascular wilt).